The following is a 291-amino-acid chain: MTTLAIDIGGTKLAAALIGADGQIRDRRELPTPASQTPQALRDALSALVSPLQAHAQRVAIASTGIIRDGSLLALNPHNLGGLLHFPLVKTLEQLTNLPTIAINDAQAAAWAEYQALDGDITDMVFITVSTGVGGGVVSGGKLRTGPGGLAGHIGHTLADPHGPACGCGRTGCVEAIASGRGIATAAQGELAGANAKTIFTRAGQGDEQAQQLIHRSARTLARLIADIKATTDCQCVVVGGSVGLAEGYLALVETYLAQEPAAFHVDLLAAHYRHDAGLLGAALLAQGEIL.

Residues 5 to 12 (AIDIGGTK) and 132 to 139 (GVGGGVVS) contribute to the ATP site. Residues His156, Cys166, Cys168, and Cys173 each contribute to the Zn(2+) site.

It belongs to the ROK (NagC/XylR) family. NanK subfamily. As to quaternary structure, homodimer.

It catalyses the reaction an N-acyl-D-mannosamine + ATP = an N-acyl-D-mannosamine 6-phosphate + ADP + H(+). It participates in amino-sugar metabolism; N-acetylneuraminate degradation; D-fructose 6-phosphate from N-acetylneuraminate: step 2/5. In terms of biological role, catalyzes the phosphorylation of N-acetylmannosamine (ManNAc) to ManNAc-6-P. This Escherichia coli O1:K1 / APEC protein is N-acetylmannosamine kinase.